A 195-amino-acid polypeptide reads, in one-letter code: Group XIIB secretory phospholipase A2-like protein (195 aa).

Positions 1–19 are cleaved as a signal peptide; it reads MKLLCGFFLLWLGLVGNLA. Serine 89, tyrosine 91, leucine 93, and aspartate 116 together coordinate Ca(2+).

The protein belongs to the phospholipase A2 family. It depends on Ca(2+) as a cofactor.

It localises to the secreted. Not known; does not seem to have catalytic activity. In Mus musculus (Mouse), this protein is Group XIIB secretory phospholipase A2-like protein (Pla2g12b).